The chain runs to 223 residues: Ribose-5-phosphate isomerase A (223 aa).

Substrate contacts are provided by residues 29-32 (TGST), 82-85 (DGAD), and 95-98 (KGGG). The Proton acceptor role is filled by Glu104. Lys122 serves as a coordination point for substrate.

This sequence belongs to the ribose 5-phosphate isomerase family. In terms of assembly, homodimer.

The enzyme catalyses aldehydo-D-ribose 5-phosphate = D-ribulose 5-phosphate. The protein operates within carbohydrate degradation; pentose phosphate pathway; D-ribose 5-phosphate from D-ribulose 5-phosphate (non-oxidative stage): step 1/1. Its function is as follows. Catalyzes the reversible conversion of ribose-5-phosphate to ribulose 5-phosphate. The sequence is that of Ribose-5-phosphate isomerase A from Neisseria meningitidis serogroup C / serotype 2a (strain ATCC 700532 / DSM 15464 / FAM18).